We begin with the raw amino-acid sequence, 282 residues long: Stress response regulator protein 1 (282 aa).

2 stretches are compositionally biased toward low complexity: residues 12–30 (NLSR…HSST) and 41–58 (SLDT…SNNN). 3 disordered regions span residues 12 to 31 (NLSR…SSTV), 41 to 84 (SLDT…DDED), and 112 to 139 (LTPF…TTVV). Over residues 66–77 (SDYNSYTHNQYY) the composition is skewed to polar residues. Residues 125–139 (SIISSKSSNKSTTVV) show a composition bias toward low complexity. Residues 155–273 (SFLIVDDNII…LDFMANSIDD (119 aa)) form the Response regulatory domain. Position 206 is a 4-aspartylphosphate (Asp-206).

In terms of biological role, required for stress adaptation, morphogenesis and virulence. The chain is Stress response regulator protein 1 (SRR1) from Candida albicans (strain WO-1) (Yeast).